The following is a 547-amino-acid chain: Intercellular adhesion molecule 3 (547 aa).

A signal peptide spans 1-29 (MATMVPSVLWPRACWTLLVCCLLTPGVQG). The Extracellular segment spans residues 30-485 (QEFLLRVEPQ…VMDIEAGSSH (456 aa)). The 58-residue stretch at 46 to 103 (GGSLFVNCSTDCPSSEKIALETSLSKELVASGMGWAAFNLSNVTGNSRILCSVYCNGS) folds into the Ig-like C2-type 1 domain. 6 N-linked (GlcNAc...) asparagine glycosylation sites follow: Asn-52, Asn-84, Asn-87, Asn-101, Asn-110, and Asn-134. 2 cysteine pairs are disulfide-bonded: Cys-53-Cys-96 and Cys-57-Cys-100. The Ig-like C2-type 2 domain occupies 132–197 (GQNFTLRCQV…FSCRTELDMQ (66 aa)). Residues Cys-139 and Cys-190 are joined by a disulfide bond. N-linked (GlcNAc...) asparagine glycosylation is found at Asn-206, Asn-264, Asn-295, Asn-308, Asn-320, Asn-363, Asn-389, Asn-453, and Asn-457. The Ig-like C2-type 3 domain maps to 234–301 (ETSWPVDCTL…IVCNVTLGGE (68 aa)). Cys-241 and Cys-294 are joined by a disulfide. Residues 329-382 (GSTVTVSCMAGARVQVTLDGVPAAAPGQPAQLQLNATESDDRRSFFCSATLEVD) form the Ig-like C2-type 4 domain. A disulfide bridge links Cys-336 with Cys-375. The 54-residue stretch at 416 to 469 (KTTHVLQCQARGNPYPELRCLKEGSSREVPVGIPFFVNVTHNGTYQCQASSSRG) folds into the Ig-like C2-type 5 domain. The cysteines at positions 423 and 462 are disulfide-linked. A helical membrane pass occupies residues 486-510 (FVPVFVAVLLTLGVVTIVLALMYVF). Residues 511-547 (REHKRSGSYHVREESTYLPLTSMQPTQAMGEEPSRAE) lie on the Cytoplasmic side of the membrane.

This sequence belongs to the immunoglobulin superfamily. ICAM family. In terms of assembly, interacts with moesin/MSN. Post-translationally, upon stimulation by a physiologic stimuli becomes rapidly and transiently phosphorylated on serine residues. Leukocytes.

The protein localises to the membrane. Functionally, ICAM proteins are ligands for the leukocyte adhesion protein LFA-1 (integrin alpha-L/beta-2). ICAM3 is also a ligand for integrin alpha-D/beta-2. In association with integrin alpha-L/beta-2, contributes to apoptotic neutrophil phagocytosis by macrophages. The protein is Intercellular adhesion molecule 3 (ICAM3) of Pan troglodytes (Chimpanzee).